Here is an 831-residue protein sequence, read N- to C-terminus: Valine--tRNA ligase (831 aa).

Positions 77 to 87 (PFTSGELHMGH) match the 'HIGH' region motif. The 'KMSKS' region signature appears at 564–568 (RMSKS). Lysine 567 lines the ATP pocket.

It belongs to the class-I aminoacyl-tRNA synthetase family. ValS type 2 subfamily.

The protein resides in the cytoplasm. It carries out the reaction tRNA(Val) + L-valine + ATP = L-valyl-tRNA(Val) + AMP + diphosphate. Catalyzes the attachment of valine to tRNA(Val). As ValRS can inadvertently accommodate and process structurally similar amino acids such as threonine, to avoid such errors, it has a 'posttransfer' editing activity that hydrolyzes mischarged Thr-tRNA(Val) in a tRNA-dependent manner. The protein is Valine--tRNA ligase of Sulfolobus acidocaldarius (strain ATCC 33909 / DSM 639 / JCM 8929 / NBRC 15157 / NCIMB 11770).